The sequence spans 264 residues: Thymidylate synthase (264 aa).

Arg21 is a dUMP binding site. His51 is a (6R)-5,10-methylene-5,6,7,8-tetrahydrofolate binding site. Residue 126–127 (RR) participates in dUMP binding. Catalysis depends on Cys146, which acts as the Nucleophile. DUMP is bound by residues 166–169 (RSAD), Asn177, and 207–209 (HLY). (6R)-5,10-methylene-5,6,7,8-tetrahydrofolate is bound at residue Asp169. Ala263 contributes to the (6R)-5,10-methylene-5,6,7,8-tetrahydrofolate binding site.

Belongs to the thymidylate synthase family. Bacterial-type ThyA subfamily. In terms of assembly, homodimer.

It localises to the cytoplasm. The catalysed reaction is dUMP + (6R)-5,10-methylene-5,6,7,8-tetrahydrofolate = 7,8-dihydrofolate + dTMP. Its pathway is pyrimidine metabolism; dTTP biosynthesis. Functionally, catalyzes the reductive methylation of 2'-deoxyuridine-5'-monophosphate (dUMP) to 2'-deoxythymidine-5'-monophosphate (dTMP) while utilizing 5,10-methylenetetrahydrofolate (mTHF) as the methyl donor and reductant in the reaction, yielding dihydrofolate (DHF) as a by-product. This enzymatic reaction provides an intracellular de novo source of dTMP, an essential precursor for DNA biosynthesis. The sequence is that of Thymidylate synthase from Bartonella tribocorum (strain CIP 105476 / IBS 506).